The following is a 444-amino-acid chain: ATP-dependent protease ATPase subunit HslU (444 aa).

ATP contacts are provided by residues Ile20 and 62–67 (GVGKTE). Residues 137–162 (LVPPSRGTSGEPERGEDSNARQTFRK) form a disordered region. ATP is bound by residues Asp257, Glu322, and Arg394.

The protein belongs to the ClpX chaperone family. HslU subfamily. A double ring-shaped homohexamer of HslV is capped on each side by a ring-shaped HslU homohexamer. The assembly of the HslU/HslV complex is dependent on binding of ATP.

The protein resides in the cytoplasm. Functionally, ATPase subunit of a proteasome-like degradation complex; this subunit has chaperone activity. The binding of ATP and its subsequent hydrolysis by HslU are essential for unfolding of protein substrates subsequently hydrolyzed by HslV. HslU recognizes the N-terminal part of its protein substrates and unfolds these before they are guided to HslV for hydrolysis. This is ATP-dependent protease ATPase subunit HslU from Bordetella petrii (strain ATCC BAA-461 / DSM 12804 / CCUG 43448).